The primary structure comprises 749 residues: NAD(P)H-quinone oxidoreductase subunit 5, chloroplastic (749 aa).

A run of 16 helical transmembrane segments spans residues 9-29, 40-60, 89-109, 125-145, 147-167, 185-205, 221-241, 260-280, 285-305, 329-349, 356-376, 398-418, 427-447, 553-573, 607-627, and 727-747; these read WIIP…LLLF, WSFT…NLSI, IDPL…MVLI, FAYM…SNLI, IYIF…FWFT, GDFG…SFEF, NGTN…GAVA, TPIS…FLVA, LFIV…ITIL, LGYT…FHLI, ALLF…VGYS, NTFL…CFWS, WLYS…TAFY, LFPL…GIPF, FVIN…LASL, and SYLF…YFFL.

It belongs to the complex I subunit 5 family. As to quaternary structure, NDH is composed of at least 16 different subunits, 5 of which are encoded in the nucleus.

It is found in the plastid. The protein resides in the chloroplast thylakoid membrane. The enzyme catalyses a plastoquinone + NADH + (n+1) H(+)(in) = a plastoquinol + NAD(+) + n H(+)(out). The catalysed reaction is a plastoquinone + NADPH + (n+1) H(+)(in) = a plastoquinol + NADP(+) + n H(+)(out). NDH shuttles electrons from NAD(P)H:plastoquinone, via FMN and iron-sulfur (Fe-S) centers, to quinones in the photosynthetic chain and possibly in a chloroplast respiratory chain. The immediate electron acceptor for the enzyme in this species is believed to be plastoquinone. Couples the redox reaction to proton translocation, and thus conserves the redox energy in a proton gradient. This chain is NAD(P)H-quinone oxidoreductase subunit 5, chloroplastic (ndhF), found in Vitis vinifera (Grape).